The chain runs to 207 residues: Thiamine-phosphate synthase (207 aa).

Residues 36–40 (QLRLK) and Asn-68 contribute to the 4-amino-2-methyl-5-(diphosphooxymethyl)pyrimidine site. Mg(2+) is bound by residues Asp-69 and Asp-88. Thr-107 lines the 4-amino-2-methyl-5-(diphosphooxymethyl)pyrimidine pocket. 134–136 (TGT) lines the 2-[(2R,5Z)-2-carboxy-4-methylthiazol-5(2H)-ylidene]ethyl phosphate pocket. Lys-137 is a binding site for 4-amino-2-methyl-5-(diphosphooxymethyl)pyrimidine. Gly-164 is a binding site for 2-[(2R,5Z)-2-carboxy-4-methylthiazol-5(2H)-ylidene]ethyl phosphate.

Belongs to the thiamine-phosphate synthase family. Mg(2+) serves as cofactor.

The enzyme catalyses 2-[(2R,5Z)-2-carboxy-4-methylthiazol-5(2H)-ylidene]ethyl phosphate + 4-amino-2-methyl-5-(diphosphooxymethyl)pyrimidine + 2 H(+) = thiamine phosphate + CO2 + diphosphate. It catalyses the reaction 2-(2-carboxy-4-methylthiazol-5-yl)ethyl phosphate + 4-amino-2-methyl-5-(diphosphooxymethyl)pyrimidine + 2 H(+) = thiamine phosphate + CO2 + diphosphate. It carries out the reaction 4-methyl-5-(2-phosphooxyethyl)-thiazole + 4-amino-2-methyl-5-(diphosphooxymethyl)pyrimidine + H(+) = thiamine phosphate + diphosphate. It participates in cofactor biosynthesis; thiamine diphosphate biosynthesis; thiamine phosphate from 4-amino-2-methyl-5-diphosphomethylpyrimidine and 4-methyl-5-(2-phosphoethyl)-thiazole: step 1/1. Condenses 4-methyl-5-(beta-hydroxyethyl)thiazole monophosphate (THZ-P) and 2-methyl-4-amino-5-hydroxymethyl pyrimidine pyrophosphate (HMP-PP) to form thiamine monophosphate (TMP). This chain is Thiamine-phosphate synthase, found in Rhodospirillum centenum (strain ATCC 51521 / SW).